The sequence spans 205 residues: High frequency lysogenization protein HflD homolog (205 aa).

It belongs to the HflD family.

It is found in the cytoplasm. The protein localises to the cell inner membrane. The polypeptide is High frequency lysogenization protein HflD homolog (Shewanella baltica (strain OS155 / ATCC BAA-1091)).